The sequence spans 194 residues: uncharacterized protein (194 aa).

To A.aeolicus AQ_423.

This is an uncharacterized protein from Aquifex aeolicus (strain VF5).